The chain runs to 445 residues: 6-phosphogluconate dehydrogenase, decarboxylating (445 aa).

Residues Ala1 to Gly4, Asn22 to Ser24, Val63 to Ala65, and Asn91 each bind NADP(+). Substrate contacts are provided by residues Asn91 and Ser117–Gly119. The Proton acceptor role is filled by Lys172. His175 to Asn176 is a binding site for substrate. Glu179 (proton donor) is an active-site residue. Substrate-binding residues include Tyr180, Lys249, Arg276, Arg434, and His440.

It belongs to the 6-phosphogluconate dehydrogenase family. As to quaternary structure, homodimer.

The catalysed reaction is 6-phospho-D-gluconate + NADP(+) = D-ribulose 5-phosphate + CO2 + NADPH. It functions in the pathway carbohydrate degradation; pentose phosphate pathway; D-ribulose 5-phosphate from D-glucose 6-phosphate (oxidative stage): step 3/3. Catalyzes the oxidative decarboxylation of 6-phosphogluconate to ribulose 5-phosphate and CO(2), with concomitant reduction of NADP to NADPH. This is 6-phosphogluconate dehydrogenase, decarboxylating (gnd) from Shigella dysenteriae.